The primary structure comprises 156 residues: Small ribosomal subunit protein uS7 (156 aa).

Belongs to the universal ribosomal protein uS7 family. Part of the 30S ribosomal subunit. Contacts proteins S9 and S11.

In terms of biological role, one of the primary rRNA binding proteins, it binds directly to 16S rRNA where it nucleates assembly of the head domain of the 30S subunit. Is located at the subunit interface close to the decoding center, probably blocks exit of the E-site tRNA. The sequence is that of Small ribosomal subunit protein uS7 from Staphylococcus aureus (strain bovine RF122 / ET3-1).